A 1583-amino-acid chain; its full sequence is Methyl-CpG-binding domain protein 5/6 homolog sba (1583 aa).

The disordered stretch occupies residues alanine 81–glycine 115. Residues histidine 83–glutamine 104 are compositionally biased toward low complexity. The region spanning arginine 238 to proline 308 is the MBD domain. 7 disordered regions span residues asparagine 427–glutamine 457, glutamate 556–leucine 579, valine 630–valine 694, alanine 839–serine 862, proline 940–glutamine 980, valine 1179–cysteine 1247, and glutamine 1287–leucine 1339. Residues proline 430–proline 439 show a composition bias toward low complexity. Residues threonine 440–histidine 449 show a composition bias toward pro residues. The span at glutamine 563–leucine 579 shows a compositional bias: low complexity. The span at alanine 658 to valine 677 shows a compositional bias: polar residues. 2 stretches are compositionally biased toward low complexity: residues serine 679–glutamine 693 and valine 851–serine 862. Polar residues-rich tracts occupy residues valine 1179–cysteine 1195, cysteine 1216–threonine 1240, and glutamine 1287–threonine 1313. The span at arginine 1323–serine 1333 shows a compositional bias: low complexity. A PWWP domain is found at isoleucine 1346–glycine 1408. The stretch at alanine 1415–serine 1446 forms a coiled coil. A disordered region spans residues isoleucine 1471 to isoleucine 1497. Residues glutamine 1474–glutamine 1488 are compositionally biased toward low complexity.

In terms of assembly, component of the polycomb repressive deubiquitinase (PR-DUB) complex, at least composed of caly/calypso, Asx and sba (MDB5/6 homolog). Interacts (via MBD domain) with Asx (via PHD domain); the interaction is important for the stability of the PR-DUB complex.

Its function is as follows. Non-catalytic component of the polycomb repressive deubiquitinase (PR-DUB) complex, a complex that specifically mediates deubiquitination of histone H2A monoubiquitinated at 'Lys-119' (H2AK118ub1). Important for maintaining stability of the PR-DUB complex. Probable epigenetic regulator involved in developmental pattern formation and eye development. The protein is Methyl-CpG-binding domain protein 5/6 homolog sba of Drosophila melanogaster (Fruit fly).